Consider the following 185-residue polypeptide: Ribosome-recycling factor (185 aa).

This sequence belongs to the RRF family.

The protein resides in the cytoplasm. Functionally, responsible for the release of ribosomes from messenger RNA at the termination of protein biosynthesis. May increase the efficiency of translation by recycling ribosomes from one round of translation to another. The sequence is that of Ribosome-recycling factor from Pseudomonas fluorescens (strain Pf0-1).